A 206-amino-acid polypeptide reads, in one-letter code: MVREPASTLLPPTSPATPAPHRLLIGRRGMVPTGANVIWKIQSGLVRSSTWGEEGDMISLGLWGPGDLIGRPLSCLDPYELECLTAVEVVAVSDPALESHESLVRSLRYTERLLSITRLRRAEAKLASLLGWIGERFGQPGATGWEIDLRRIPLTHQVIAELSGSTRVTTTRLLGEFRQAGRIHRRDRALIVRYPETLYPPARLSA.

One can recognise an HTH crp-type domain in the interval 120-196 (RRAEAKLASL…DRALIVRYPE (77 aa)). Positions 156–175 (HQVIAELSGSTRVTTTRLLG) form a DNA-binding region, H-T-H motif.

It localises to the cytoplasm. Its function is as follows. Probably regulates the expression of genes from the sulfate permease complex. This Synechococcus elongatus (strain ATCC 33912 / PCC 7942 / FACHB-805) (Anacystis nidulans R2) protein is Regulatory protein CysR (cysR).